Consider the following 206-residue polypeptide: Small ribosomal subunit protein uS4 (206 aa).

An S4 RNA-binding domain is found at 96–168; that stretch reads SRLDNVVYRM…LELAEQREKP (73 aa).

This sequence belongs to the universal ribosomal protein uS4 family. Part of the 30S ribosomal subunit. Contacts protein S5. The interaction surface between S4 and S5 is involved in control of translational fidelity.

One of the primary rRNA binding proteins, it binds directly to 16S rRNA where it nucleates assembly of the body of the 30S subunit. Its function is as follows. With S5 and S12 plays an important role in translational accuracy. The sequence is that of Small ribosomal subunit protein uS4 from Baumannia cicadellinicola subsp. Homalodisca coagulata.